The primary structure comprises 122 residues: Small ribosomal subunit protein uS13 (122 aa).

The disordered stretch occupies residues 97–122 (PVRGQRTKTNARTRKGPARTVAGKKK).

Belongs to the universal ribosomal protein uS13 family. In terms of assembly, part of the 30S ribosomal subunit. Forms a loose heterodimer with protein S19. Forms two bridges to the 50S subunit in the 70S ribosome.

In terms of biological role, located at the top of the head of the 30S subunit, it contacts several helices of the 16S rRNA. In the 70S ribosome it contacts the 23S rRNA (bridge B1a) and protein L5 of the 50S subunit (bridge B1b), connecting the 2 subunits; these bridges are implicated in subunit movement. Contacts the tRNAs in the A and P-sites. In Geobacter sulfurreducens (strain ATCC 51573 / DSM 12127 / PCA), this protein is Small ribosomal subunit protein uS13.